The sequence spans 210 residues: Glycerol-3-phosphate acyltransferase (210 aa).

Transmembrane regions (helical) follow at residues 4–24 (LIVA…IVSA), 52–72 (AAIL…WLTG), 82–102 (DTSV…PVFF), 118–138 (LAIN…VAFF), and 159–179 (FLFG…LLIW).

The protein belongs to the PlsY family. Probably interacts with PlsX.

The protein resides in the cell inner membrane. The enzyme catalyses an acyl phosphate + sn-glycerol 3-phosphate = a 1-acyl-sn-glycero-3-phosphate + phosphate. It functions in the pathway lipid metabolism; phospholipid metabolism. Catalyzes the transfer of an acyl group from acyl-phosphate (acyl-PO(4)) to glycerol-3-phosphate (G3P) to form lysophosphatidic acid (LPA). This enzyme utilizes acyl-phosphate as fatty acyl donor, but not acyl-CoA or acyl-ACP. The protein is Glycerol-3-phosphate acyltransferase of Paraburkholderia phymatum (strain DSM 17167 / CIP 108236 / LMG 21445 / STM815) (Burkholderia phymatum).